Here is a 164-residue protein sequence, read N- to C-terminus: Protein-export protein SecB (164 aa).

It belongs to the SecB family. As to quaternary structure, homotetramer, a dimer of dimers. One homotetramer interacts with 1 SecA dimer.

The protein resides in the cytoplasm. In terms of biological role, one of the proteins required for the normal export of preproteins out of the cell cytoplasm. It is a molecular chaperone that binds to a subset of precursor proteins, maintaining them in a translocation-competent state. It also specifically binds to its receptor SecA. The polypeptide is Protein-export protein SecB (Stutzerimonas stutzeri (strain A1501) (Pseudomonas stutzeri)).